Consider the following 523-residue polypeptide: Amino acid transporter protein 6 (523 aa).

Residues 1 to 19 (MLNVFGVSASMPDDSRSQK) are Cytoplasmic-facing. Residues 20 to 40 (MGLLGAISYIVGNIVGSGIFI) form a helical membrane-spanning segment. Over 41-51 (TPTSIIENVNS) the chain is Extracellular. A helical transmembrane segment spans residues 52-72 (VGLSLAIWILAAFISMLGSFC). Residues 73–86 (YVELGTSIRLSGGD) are Cytoplasmic-facing. Residues 87 to 107 (FAYLCFMKWYPVAFAFMCIGC) traverse the membrane as a helical segment. The Extracellular portion of the chain corresponds to 108-145 (TINYPATLAVQAQTFAEYVFRGAGVELDETSEFWAKKL). Residues 146 to 166 (LGFSLIILLMFMNFFSLKTFV) form a helical membrane-spanning segment. The Cytoplasmic segment spans residues 167–173 (QRFSILA). A helical membrane pass occupies residues 174-194 (SLAKIAATLLIIITGFYYLIF). The Extracellular portion of the chain corresponds to 195-214 (KHWKQNLEEPFKGSNWNPGP). A helical membrane pass occupies residues 215-235 (FVNALFAGLFSYDGWDILNFG). Residues 236 to 249 (AEEIENPKRTMPLS) lie on the Cytoplasmic side of the membrane. The chain crosses the membrane as a helical span at residues 250 to 270 (IIIGMTCIGVIYVAVNVAYSI). Over 271–290 (VLSPTEMIASNAVAIDFANK) the chain is Extracellular. Asn289 is a glycosylation site (N-linked (GlcNAc...) asparagine). The chain crosses the membrane as a helical span at residues 291–311 (TLGAAAFVVPVMVAILLIGSL). The Cytoplasmic portion of the chain corresponds to 312–348 (NSTMFSASRYLQAVSRQGHIPSAISGIAPNCDSPRVA). Residues 349 to 369 (LLVHILIAIAVSFLGDPDKLI) form a helical membrane-spanning segment. Over 370–404 (NYVAFAQWSQRAFTMSALLYLRIRGRPRHPDRIQL) the chain is Extracellular. Residues 405–425 (PIIMPILFFLVCTSMVVISII) form a helical membrane-spanning segment. Over 426 to 429 (DDFK) the chain is Cytoplasmic. Residues 430–450 (SSAVGLGILLGGLIIFIIFVW) form a helical membrane-spanning segment. The Extracellular portion of the chain corresponds to 451–523 (DRALPSSHTF…GNGQFKCTRM (73 aa)). Residue Asn462 is glycosylated (N-linked (GlcNAc...) asparagine). The PDZ-binding motif signature appears at 521–523 (TRM).

It belongs to the amino acid-polyamine-organocation (APC) superfamily. Interacts (via PDZ-binding motif) with nfrl-1 (via PDZ 2 domain); the interaction with nrfl-1 is required to sequester aat-6 to the apical cell membrane of intestinal cells. As to expression, expressed at the apical cell membrane of intestinal cells.

The protein localises to the apical cell membrane. Its function is as follows. Amino acid transporter that mediates the uptake of the L-enantiomers of various amino acids, including L-glutamate. May play a role in promoting fertility. The sequence is that of Amino acid transporter protein 6 from Caenorhabditis elegans.